Here is a 1395-residue protein sequence, read N- to C-terminus: DNA-directed RNA polymerase subunit beta' (1395 aa).

4 residues coordinate Zn(2+): C70, C72, C85, and C88. Residues D470, D472, and D474 each coordinate Mg(2+). Residues C815, C889, C896, and C899 each coordinate Zn(2+).

Belongs to the RNA polymerase beta' chain family. As to quaternary structure, the RNAP catalytic core consists of 2 alpha, 1 beta, 1 beta' and 1 omega subunit. When a sigma factor is associated with the core the holoenzyme is formed, which can initiate transcription. It depends on Mg(2+) as a cofactor. Requires Zn(2+) as cofactor.

The catalysed reaction is RNA(n) + a ribonucleoside 5'-triphosphate = RNA(n+1) + diphosphate. Functionally, DNA-dependent RNA polymerase catalyzes the transcription of DNA into RNA using the four ribonucleoside triphosphates as substrates. The sequence is that of DNA-directed RNA polymerase subunit beta' from Anaeromyxobacter sp. (strain Fw109-5).